Here is a 331-residue protein sequence, read N- to C-terminus: Probable inactive O-methyltransferase 11 (331 aa).

Residues G179, D202, 224 to 226, D225, F226, and K239 each bind S-adenosyl-L-methionine; that span reads GDF.

It belongs to the class I-like SAM-binding methyltransferase superfamily. Cation-independent O-methyltransferase family. COMT subfamily.

The sequence is that of Probable inactive O-methyltransferase 11 (omt11) from Dictyostelium discoideum (Social amoeba).